Here is a 98-residue protein sequence, read N- to C-terminus: Mobilization protein MobS (98 aa).

This protein is essential to promote the specific transfer of the plasmid in the presence of conjugative plasmids. The sequence is that of Mobilization protein MobS (mobS) from Acidithiobacillus ferridurans.